A 169-amino-acid polypeptide reads, in one-letter code: UPF0303 protein BMEI0598 (169 aa).

It belongs to the UPF0303 family.

This Brucella melitensis biotype 1 (strain ATCC 23456 / CCUG 17765 / NCTC 10094 / 16M) protein is UPF0303 protein BMEI0598.